The sequence spans 199 residues: Riboflavin synthase (199 aa).

Lumazine-binding repeat units follow at residues 1–95 and 96–188; these read MFSG…IGGH and FVSG…VDTI. 2,4-dihydroxypteridine-binding positions include 4–6, 46–48, 60–65, 99–101, lysine 130, 139–141, and 153–158; these read GII, CLT, DVTEET, GHV, SLT, and SLIPET.

Homotrimer.

It carries out the reaction 2 6,7-dimethyl-8-(1-D-ribityl)lumazine + H(+) = 5-amino-6-(D-ribitylamino)uracil + riboflavin. It participates in cofactor biosynthesis; riboflavin biosynthesis; riboflavin from 2-hydroxy-3-oxobutyl phosphate and 5-amino-6-(D-ribitylamino)uracil: step 2/2. Catalyzes the dismutation of two molecules of 6,7-dimethyl-8-ribityllumazine, resulting in the formation of riboflavin and 5-amino-6-(D-ribitylamino)uracil. This chain is Riboflavin synthase (ribE), found in Chlamydia trachomatis serovar D (strain ATCC VR-885 / DSM 19411 / UW-3/Cx).